A 371-amino-acid polypeptide reads, in one-letter code: Probable endolytic peptidoglycan transglycosylase RlpA (371 aa).

Residues 1-25 (MNQRHLWTIVALSVTVLGTPAVGRT) form the signal peptide. The span at 177–191 (LVASQSQNKSSSSQQ) shows a compositional bias: low complexity. The segment at 177-196 (LVASQSQNKSSSSQQKSERY) is disordered.

It belongs to the RlpA family.

Lytic transglycosylase with a strong preference for naked glycan strands that lack stem peptides. This is Probable endolytic peptidoglycan transglycosylase RlpA from Nostoc sp. (strain PCC 7120 / SAG 25.82 / UTEX 2576).